A 429-amino-acid polypeptide reads, in one-letter code: Glutamate-1-semialdehyde 2,1-aminomutase 2 (429 aa).

Lys-267 carries the post-translational modification N6-(pyridoxal phosphate)lysine.

The protein belongs to the class-III pyridoxal-phosphate-dependent aminotransferase family. HemL subfamily. Homodimer. The cofactor is pyridoxal 5'-phosphate.

It localises to the cytoplasm. The catalysed reaction is (S)-4-amino-5-oxopentanoate = 5-aminolevulinate. It participates in porphyrin-containing compound metabolism; protoporphyrin-IX biosynthesis; 5-aminolevulinate from L-glutamyl-tRNA(Glu): step 2/2. The chain is Glutamate-1-semialdehyde 2,1-aminomutase 2 from Brevibacillus brevis (strain 47 / JCM 6285 / NBRC 100599).